A 532-amino-acid chain; its full sequence is Eukaryotic translation initiation factor 4B1 (532 aa).

3 disordered regions span residues 16-365, 401-434, and 451-532; these read EAER…LEEQ, KKLE…IIRG, and RFRQ…REGW. The span at 26–35 shows a compositional bias: low complexity; the sequence is AEATAATADT. Gly residues-rich tracts occupy residues 105 to 120 and 132 to 147; these read RLGG…SGGR and WSGG…YGGG. Basic and acidic residues predominate over residues 167-180; it reads RADEVDDWGKEKKP. The Nuclear localization signal 1 motif lies at 177 to 184; that stretch reads EKKPLPSF. The span at 193-217 shows a compositional bias: gly residues; sequence SGDGGGFGGGGSGFGGGGGGGGGGL. Residues 237-244 carry the Nuclear localization signal 2 motif; that stretch reads SSTFGSSF. Positions 237 to 247 are enriched in low complexity; that stretch reads SSTFGSSFGDS. Basic and acidic residues-rich tracts occupy residues 249–263 and 286–310; these read QEER…RKVE and RPRE…EAKK. A compositionally biased stretch (low complexity) spans 315–337; the sequence is TSRPTSAHSSRPSSAQSNRSESS. 4 stretches are compositionally biased toward basic and acidic residues: residues 355–365, 401–416, 472–494, and 507–520; these read AKPREVLLEEQ, KKLE…KESD, ERTH…ERPR, and NEQR…KERG.

It belongs to the eIF-4 subunit B family. As to quaternary structure, homodimer. Nonspherical monomer. mRNA-discriminating component of initiation complexes. In terms of processing, phosphorylated.

Its subcellular location is the nucleus. In terms of biological role, promotes the eIF4F and eIF4A RNA-dependent ATP-hydrolysis activity with different efficiency depending on mRNAs, thus providing mRNA discrimination during initiation of translation. The sequence is that of Eukaryotic translation initiation factor 4B1 from Arabidopsis thaliana (Mouse-ear cress).